The chain runs to 196 residues: RNA pyrophosphohydrolase (196 aa).

In terms of domain architecture, Nudix hydrolase spans 6 to 149 (GYRPNVGIVI…KRDVYRKVMK (144 aa)). The short motif at 38–59 (GGINDNESAEQAMYRELHEEVG) is the Nudix box element.

The protein belongs to the Nudix hydrolase family. RppH subfamily. The cofactor is a divalent metal cation.

Its function is as follows. Accelerates the degradation of transcripts by removing pyrophosphate from the 5'-end of triphosphorylated RNA, leading to a more labile monophosphorylated state that can stimulate subsequent ribonuclease cleavage. This is RNA pyrophosphohydrolase from Haemophilus influenzae (strain ATCC 51907 / DSM 11121 / KW20 / Rd).